A 198-amino-acid chain; its full sequence is Alpha-S1-casein (198 aa).

An N-terminal signal peptide occupies residues 1-15 (MKLLILTCLVASAVA). 2 disordered regions span residues 28 to 47 (QTQR…LKEE) and 71 to 97 (SEST…EQKH). Residues Ser-39, Ser-80, Ser-81, Ser-83, Ser-84, and Ser-85 each carry the phosphoserine modification.

The protein belongs to the alpha-casein family. As to expression, mammary gland specific. Secreted in milk.

It is found in the secreted. In terms of biological role, important role in the capacity of milk to transport calcium phosphate. The sequence is that of Alpha-S1-casein (CSN1S1) from Cavia porcellus (Guinea pig).